Here is a 364-residue protein sequence, read N- to C-terminus: Probable tartrate dehydrogenase/decarboxylase TtuC (364 aa).

3 residues coordinate Mn(2+): aspartate 222, aspartate 246, and aspartate 250.

It belongs to the isocitrate and isopropylmalate dehydrogenases family. Mg(2+) is required as a cofactor. Requires Mn(2+) as cofactor. It depends on K(+) as a cofactor.

The protein localises to the cytoplasm. It catalyses the reaction tartrate + NAD(+) = 2-hydroxy-3-oxosuccinate + NADH + H(+). The catalysed reaction is (2R,3S)-tartrate + NAD(+) = 2-hydroxy-3-oxosuccinate + NADH + H(+). The enzyme catalyses (2R,3R)-tartrate + NAD(+) = 2-hydroxy-3-oxosuccinate + NADH + H(+). It carries out the reaction (2R,3R)-tartrate + H(+) = (R)-glycerate + CO2. It catalyses the reaction (R)-malate + NAD(+) = pyruvate + CO2 + NADH. It participates in carbohydrate acid metabolism; tartrate degradation; 2-hydroxy-3-oxosuccinate from L-tartrate: step 1/1. It functions in the pathway carbohydrate acid metabolism; tartrate degradation; 2-hydroxy-3-oxosuccinate from meso-tartrate: step 1/1. The protein operates within carbohydrate acid metabolism; tartrate degradation; D-glycerate from L-tartrate: step 1/1. In terms of biological role, has multiple catalytic activities. Apart from catalyzing the oxidation of (+)-tartrate to oxaloglycolate, also converts meso-tartrate to D-glycerate and catalyzes the oxidative decarboxylation of D-malate to pyruvate. This chain is Probable tartrate dehydrogenase/decarboxylase TtuC (ttuC), found in Agrobacterium vitis (Rhizobium vitis).